Consider the following 142-residue polypeptide: Putative pre-16S rRNA nuclease (142 aa).

This sequence belongs to the YqgF nuclease family.

It localises to the cytoplasm. In terms of biological role, could be a nuclease involved in processing of the 5'-end of pre-16S rRNA. The polypeptide is Putative pre-16S rRNA nuclease (Lactobacillus delbrueckii subsp. bulgaricus (strain ATCC 11842 / DSM 20081 / BCRC 10696 / JCM 1002 / NBRC 13953 / NCIMB 11778 / NCTC 12712 / WDCM 00102 / Lb 14)).